A 530-amino-acid polypeptide reads, in one-letter code: Autoinducer-2 kinase (530 aa).

It belongs to the FGGY kinase family.

It is found in the cytoplasm. It carries out the reaction (S)-4,5-dihydroxypentane-2,3-dione + ATP = (2S)-2-hydroxy-3,4-dioxopentyl phosphate + ADP + H(+). Functionally, catalyzes the phosphorylation of autoinducer-2 (AI-2) to phospho-AI-2, which subsequently inactivates the transcriptional regulator LsrR and leads to the transcription of the lsr operon. Phosphorylates the ring-open form of (S)-4,5-dihydroxypentane-2,3-dione (DPD), which is the precursor to all AI-2 signaling molecules, at the C5 position. The protein is Autoinducer-2 kinase of Escherichia coli O139:H28 (strain E24377A / ETEC).